Reading from the N-terminus, the 181-residue chain is NAD(P)H-quinone oxidoreductase subunit 6, chloroplastic (181 aa).

The next 5 membrane-spanning stretches (helical) occupy residues 10 to 30 (TLLFVVLEFAILVGALGVVLL), 33 to 53 (VIYSALLLGFVFICVALLYLL), 62 to 82 (AQVLIYVGAVNVLIVFAIMLV), 98 to 118 (IISAFTFIALFVLLTIMIFTT), and 153 to 173 (LFPFELLSLLLLVALVGAITI).

It belongs to the complex I subunit 6 family. In terms of assembly, NDH is composed of at least 16 different subunits, 5 of which are encoded in the nucleus.

The protein resides in the plastid. It is found in the chloroplast thylakoid membrane. The enzyme catalyses a plastoquinone + NADH + (n+1) H(+)(in) = a plastoquinol + NAD(+) + n H(+)(out). It catalyses the reaction a plastoquinone + NADPH + (n+1) H(+)(in) = a plastoquinol + NADP(+) + n H(+)(out). Functionally, NDH shuttles electrons from NAD(P)H:plastoquinone, via FMN and iron-sulfur (Fe-S) centers, to quinones in the photosynthetic chain and possibly in a chloroplast respiratory chain. The immediate electron acceptor for the enzyme in this species is believed to be plastoquinone. Couples the redox reaction to proton translocation, and thus conserves the redox energy in a proton gradient. This is NAD(P)H-quinone oxidoreductase subunit 6, chloroplastic (ndhG) from Zygnema circumcarinatum (Green alga).